The chain runs to 342 residues: Glucokinase (342 aa).

Glycine 18–threonine 23 provides a ligand contact to ATP.

The protein belongs to the bacterial glucokinase family.

The protein localises to the cytoplasm. It catalyses the reaction D-glucose + ATP = D-glucose 6-phosphate + ADP + H(+). The chain is Glucokinase from Chelativorans sp. (strain BNC1).